Reading from the N-terminus, the 568-residue chain is Proline--tRNA ligase (568 aa).

Belongs to the class-II aminoacyl-tRNA synthetase family. ProS type 1 subfamily. As to quaternary structure, homodimer.

It is found in the cytoplasm. The catalysed reaction is tRNA(Pro) + L-proline + ATP = L-prolyl-tRNA(Pro) + AMP + diphosphate. In terms of biological role, catalyzes the attachment of proline to tRNA(Pro) in a two-step reaction: proline is first activated by ATP to form Pro-AMP and then transferred to the acceptor end of tRNA(Pro). As ProRS can inadvertently accommodate and process non-cognate amino acids such as alanine and cysteine, to avoid such errors it has two additional distinct editing activities against alanine. One activity is designated as 'pretransfer' editing and involves the tRNA(Pro)-independent hydrolysis of activated Ala-AMP. The other activity is designated 'posttransfer' editing and involves deacylation of mischarged Ala-tRNA(Pro). The misacylated Cys-tRNA(Pro) is not edited by ProRS. In Nitrosomonas eutropha (strain DSM 101675 / C91 / Nm57), this protein is Proline--tRNA ligase.